A 298-amino-acid polypeptide reads, in one-letter code: ADP/ATP translocase 1 (298 aa).

Over Met-1–Ser-7 the chain is Mitochondrial intermembrane. An N-acetylserine modification is found at Ser-2. A Solcar 1 repeat occupies Leu-6–Ile-98. At Ser-7 the chain carries Phosphoserine. A helical membrane pass occupies residues Phe-8 to Gln-37. Over Val-38–Asn-74 the chain is Mitochondrial matrix. The residue at position 52 (Lys-52) is an N6,N6,N6-trimethyllysine. Lys-52 bears the N6-methyllysine mark. A helical transmembrane segment spans residues Leu-75–Phe-99. ADP is bound by residues Arg-80 and Lys-92. Over Leu-100 to Phe-109 the chain is Mitochondrial intermembrane. A helical transmembrane segment spans residues Trp-110 to Phe-130. Solcar repeat units lie at residues Arg-111–Met-201 and Val-212–Phe-297. Topologically, residues Val-131 to Asn-178 are mitochondrial matrix. Lys-147 carries the N6-succinyllysine modification. Cys-160 carries the S-nitrosocysteine modification. The chain crosses the membrane as a helical span at residues Val-179–Lys-199. The Mitochondrial intermembrane segment spans residues Gly-200–Ile-210. The helical transmembrane segment at Ile-211 to Phe-231 threads the bilayer. Residues Asp-232–Gly-273 are Mitochondrial matrix-facing. Arg-235 lines the ADP pocket. An important for transport activity region spans residues Arg-235–Met-240. The Nucleotide carrier signature motif motif lies at Arg-235–Met-240. 2 positions are modified to N6-succinyllysine: Lys-245 and Lys-272. A helical membrane pass occupies residues Ala-274 to Tyr-291. Over Asp-292–Val-298 the chain is Mitochondrial intermembrane.

Belongs to the mitochondrial carrier (TC 2.A.29) family. As to quaternary structure, monomer. Found in a complex with ARL2, ARL2BP and SLC25A4/ANT1. Interacts with ARL2BP. Interacts with TIMM44; leading to inhibit the presequence translocase TIMM23, thereby promoting stabilization of PINK1. In terms of processing, under cell death induction, transglutaminated by TGM2. Transglutamination leads to formation of covalent cross-links between a glutamine and the epsilon-amino group of a lysine residue, forming polymers. As to expression, detected in heart muscle (at protein level). Detected in heart.

Its subcellular location is the mitochondrion inner membrane. It localises to the membrane. The enzyme catalyses ADP(in) + ATP(out) = ADP(out) + ATP(in). It carries out the reaction H(+)(in) = H(+)(out). With respect to regulation, the matrix-open state (m-state) is inhibited by the membrane-permeable bongkrekic acid (BKA). The cytoplasmic-open state (c-state) is inhibited by the membrane-impermeable toxic inhibitor carboxyatractyloside (CATR). Proton transporter activity is inhibited by ADP:ATP antiporter activity. Functionally, ADP:ATP antiporter that mediates import of ADP into the mitochondrial matrix for ATP synthesis, and export of ATP out to fuel the cell. Cycles between the cytoplasmic-open state (c-state) and the matrix-open state (m-state): operates by the alternating access mechanism with a single substrate-binding site intermittently exposed to either the cytosolic (c-state) or matrix (m-state) side of the inner mitochondrial membrane. In addition to its ADP:ATP antiporter activity, also involved in mitochondrial uncoupling and mitochondrial permeability transition pore (mPTP) activity. Plays a role in mitochondrial uncoupling by acting as a proton transporter: proton transport uncouples the proton flows via the electron transport chain and ATP synthase to reduce the efficiency of ATP production and cause mitochondrial thermogenesis. Proton transporter activity is inhibited by ADP:ATP antiporter activity, suggesting that SLC25A4/ANT1 acts as a master regulator of mitochondrial energy output by maintaining a delicate balance between ATP production (ADP:ATP antiporter activity) and thermogenesis (proton transporter activity). Proton transporter activity requires free fatty acids as cofactor, but does not transport it. Probably mediates mitochondrial uncoupling in tissues that do not express UCP1. Also plays a key role in mPTP opening, a non-specific pore that enables free passage of the mitochondrial membranes to solutes of up to 1.5 kDa, and which contributes to cell death. It is however unclear if SLC25A4/ANT1 constitutes a pore-forming component of mPTP or regulates it. Acts as a regulator of mitophagy independently of ADP:ATP antiporter activity: promotes mitophagy via interaction with TIMM44, leading to inhibit the presequence translocase TIMM23, thereby promoting stabilization of PINK1. The chain is ADP/ATP translocase 1 from Bos taurus (Bovine).